We begin with the raw amino-acid sequence, 213 residues long: Pyridoxine/pyridoxamine 5'-phosphate oxidase (213 aa).

Substrate is bound by residues 9 to 12 (RKSY) and lysine 67. FMN is bound by residues 62 to 67 (RVVLIK), 77 to 78 (YT), arginine 83, and lysine 84. Residues tyrosine 124, arginine 128, and serine 132 each coordinate substrate. FMN-binding positions include 141–142 (QS) and tryptophan 185. Residue 191–193 (RLH) coordinates substrate. Arginine 195 contributes to the FMN binding site.

Belongs to the pyridoxamine 5'-phosphate oxidase family. As to quaternary structure, homodimer. The cofactor is FMN.

It carries out the reaction pyridoxamine 5'-phosphate + O2 + H2O = pyridoxal 5'-phosphate + H2O2 + NH4(+). The enzyme catalyses pyridoxine 5'-phosphate + O2 = pyridoxal 5'-phosphate + H2O2. It participates in cofactor metabolism; pyridoxal 5'-phosphate salvage; pyridoxal 5'-phosphate from pyridoxamine 5'-phosphate: step 1/1. The protein operates within cofactor metabolism; pyridoxal 5'-phosphate salvage; pyridoxal 5'-phosphate from pyridoxine 5'-phosphate: step 1/1. Functionally, catalyzes the oxidation of either pyridoxine 5'-phosphate (PNP) or pyridoxamine 5'-phosphate (PMP) into pyridoxal 5'-phosphate (PLP). The protein is Pyridoxine/pyridoxamine 5'-phosphate oxidase of Methylibium petroleiphilum (strain ATCC BAA-1232 / LMG 22953 / PM1).